A 1508-amino-acid polypeptide reads, in one-letter code: uncharacterized protein (1508 aa).

Residues 149-267 are a coiled coil; that stretch reads ARRQQWRLRR…ARSLQEHRAT (119 aa). Disordered regions lie at residues 248–268, 345–403, 536–575, 725–754, and 868–916; these read ERSE…RATE, SQDW…LAGS, FLKK…GKNL, GLEE…SQEH, and EAKS…AEPW. Residues 868–881 are compositionally biased toward basic and acidic residues; it reads EAKSKESGEGDKPG. Residues 972–1034 adopt a coiled-coil conformation; that stretch reads ISRLERDNHR…KGNLGQLQKA (63 aa). 2 disordered regions span residues 1158–1186 and 1204–1246; these read LAAG…LVWR and KEAH…EEDP. Positions 1163-1172 are enriched in polar residues; it reads TGPSTGTGNS. The span at 1204–1215 shows a compositional bias: basic and acidic residues; it reads KEAHLEKEEKRP. Residues 1220–1230 are compositionally biased toward polar residues; that stretch reads AQGQALSSLSN. A coiled-coil region spans residues 1271–1302; sequence HQASLDEATRLQEELQAKLEELQKKQHEAKLA.

This is an uncharacterized protein from Homo sapiens (Human).